Consider the following 395-residue polypeptide: Chorismate synthase (395 aa).

It belongs to the chorismate synthase family. Homotetramer. The cofactor is FMNH2.

The catalysed reaction is 5-O-(1-carboxyvinyl)-3-phosphoshikimate = chorismate + phosphate. It functions in the pathway metabolic intermediate biosynthesis; chorismate biosynthesis; chorismate from D-erythrose 4-phosphate and phosphoenolpyruvate: step 7/7. This chain is Chorismate synthase, found in Schizosaccharomyces pombe (strain 972 / ATCC 24843) (Fission yeast).